The chain runs to 200 residues: MPIEFIATSKLPTAFGEFNISVFQDPVTGEEHVALSKGLENPPTDPVLVRVHSECLTGDAFASLKCDCGPQLQATQKLINEAGQGVILYLRQEGRGIGLTNKIRAYALQDQGHDTVDANLLLNLPADARRYDMCSIMLDHLKVKEVKLITNNPLKIQALKDQGINVVDRVPLTVGRNPFNEQYLKTKRERMAHLYQKDDF.

50-54 (RVHSE) provides a ligand contact to GTP. Zn(2+) is bound by residues Cys55, Cys66, and Cys68. GTP contacts are provided by residues Gln71, 93-95 (EGR), and Thr115. Asp127 functions as the Proton acceptor in the catalytic mechanism. Arg129 acts as the Nucleophile in catalysis. The GTP site is built by Thr150 and Lys155.

Belongs to the GTP cyclohydrolase II family. Requires Zn(2+) as cofactor.

The catalysed reaction is GTP + 4 H2O = 2,5-diamino-6-hydroxy-4-(5-phosphoribosylamino)-pyrimidine + formate + 2 phosphate + 3 H(+). The protein operates within cofactor biosynthesis; riboflavin biosynthesis; 5-amino-6-(D-ribitylamino)uracil from GTP: step 1/4. Functionally, catalyzes the conversion of GTP to 2,5-diamino-6-ribosylamino-4(3H)-pyrimidinone 5'-phosphate (DARP), formate and pyrophosphate. The chain is GTP cyclohydrolase-2 from Acinetobacter baumannii (strain SDF).